We begin with the raw amino-acid sequence, 61 residues long: Small ribosomal subunit protein uS14 (61 aa).

The Zn(2+) site is built by C24, C27, C40, and C43.

The protein belongs to the universal ribosomal protein uS14 family. Zinc-binding uS14 subfamily. As to quaternary structure, part of the 30S ribosomal subunit. Contacts proteins S3 and S10. It depends on Zn(2+) as a cofactor.

Binds 16S rRNA, required for the assembly of 30S particles and may also be responsible for determining the conformation of the 16S rRNA at the A site. The chain is Small ribosomal subunit protein uS14 from Mesomycoplasma hyopneumoniae (strain 232) (Mycoplasma hyopneumoniae).